Reading from the N-terminus, the 243-residue chain is Biosynthetic peptidoglycan transglycosylase (243 aa).

A helical transmembrane segment spans residues 22 to 42; that stretch reads LIVLLVLALMSVLQVIVFRFV.

The protein belongs to the glycosyltransferase 51 family.

The protein resides in the cell inner membrane. It carries out the reaction [GlcNAc-(1-&gt;4)-Mur2Ac(oyl-L-Ala-gamma-D-Glu-L-Lys-D-Ala-D-Ala)](n)-di-trans,octa-cis-undecaprenyl diphosphate + beta-D-GlcNAc-(1-&gt;4)-Mur2Ac(oyl-L-Ala-gamma-D-Glu-L-Lys-D-Ala-D-Ala)-di-trans,octa-cis-undecaprenyl diphosphate = [GlcNAc-(1-&gt;4)-Mur2Ac(oyl-L-Ala-gamma-D-Glu-L-Lys-D-Ala-D-Ala)](n+1)-di-trans,octa-cis-undecaprenyl diphosphate + di-trans,octa-cis-undecaprenyl diphosphate + H(+). It participates in cell wall biogenesis; peptidoglycan biosynthesis. Peptidoglycan polymerase that catalyzes glycan chain elongation from lipid-linked precursors. The protein is Biosynthetic peptidoglycan transglycosylase of Xylella fastidiosa (strain 9a5c).